We begin with the raw amino-acid sequence, 158 residues long: Ribosome-binding factor A (158 aa).

Residues 127–158 form a disordered region; the sequence is RQGAVHAGDADPYKESAAEEPAAYEDDERRPD. The segment covering 134–143 has biased composition (basic and acidic residues); sequence GDADPYKESA.

Belongs to the RbfA family. As to quaternary structure, monomer. Binds 30S ribosomal subunits, but not 50S ribosomal subunits or 70S ribosomes.

The protein resides in the cytoplasm. Its function is as follows. One of several proteins that assist in the late maturation steps of the functional core of the 30S ribosomal subunit. Associates with free 30S ribosomal subunits (but not with 30S subunits that are part of 70S ribosomes or polysomes). Required for efficient processing of 16S rRNA. May interact with the 5'-terminal helix region of 16S rRNA. This chain is Ribosome-binding factor A, found in Mycobacteroides abscessus (strain ATCC 19977 / DSM 44196 / CCUG 20993 / CIP 104536 / JCM 13569 / NCTC 13031 / TMC 1543 / L948) (Mycobacterium abscessus).